Here is a 219-residue protein sequence, read N- to C-terminus: 7-cyano-7-deazaguanine synthase (219 aa).

10–20 (FSGGQDSTTCL) provides a ligand contact to ATP. Zn(2+)-binding residues include Cys-188, Cys-197, Cys-200, and Cys-203.

This sequence belongs to the QueC family. In terms of assembly, homodimer. Zn(2+) serves as cofactor.

It catalyses the reaction 7-carboxy-7-deazaguanine + NH4(+) + ATP = 7-cyano-7-deazaguanine + ADP + phosphate + H2O + H(+). The protein operates within purine metabolism; 7-cyano-7-deazaguanine biosynthesis. In terms of biological role, catalyzes the ATP-dependent conversion of 7-carboxy-7-deazaguanine (CDG) to 7-cyano-7-deazaguanine (preQ(0)). This chain is 7-cyano-7-deazaguanine synthase, found in Clostridium botulinum (strain Langeland / NCTC 10281 / Type F).